We begin with the raw amino-acid sequence, 105 residues long: BLOC-1-related complex subunit 7 (105 aa).

Belongs to the BORCS7 family. Component of the BLOC-one-related complex (BORC) which is composed of BLOC1S1, BLOC1S2, BORCS5, BORCS6, BORCS7, BORCS8, KXD1 and SNAPIN.

It is found in the lysosome membrane. As part of the BORC complex may play a role in lysosomes movement and localization at the cell periphery. Associated with the cytosolic face of lysosomes, the BORC complex may recruit ARL8B and couple lysosomes to microtubule plus-end-directed kinesin motor. The protein is BLOC-1-related complex subunit 7 of Bos taurus (Bovine).